Consider the following 225-residue polypeptide: Cytidylate kinase (225 aa).

11–19 (GPSGAGKGT) lines the ATP pocket.

This sequence belongs to the cytidylate kinase family. Type 1 subfamily.

It is found in the cytoplasm. It catalyses the reaction CMP + ATP = CDP + ADP. It carries out the reaction dCMP + ATP = dCDP + ADP. This chain is Cytidylate kinase, found in Mannheimia succiniciproducens (strain KCTC 0769BP / MBEL55E).